Here is an 819-residue protein sequence, read N- to C-terminus: Plastid division protein CDP1, chloroplastic (819 aa).

A chloroplast-targeting transit peptide spans methionine 1 to valine 76. At aspartate 77 to glutamine 572 the chain is on the stromal side. Positions glutamate 419–asparagine 439 form a coiled coil. Residues serine 573–leucine 593 traverse the membrane as a helical segment. The Chloroplast intermembrane segment spans residues lysine 594–lysine 819. Residues isoleucine 762–glutamate 782 are a coiled coil.

Self-interacts. Interacts (via N-terminus) with ARC3 (via MORN domains). Binds (via N-terminus) to FTSZ2 proteins, FTSZ2-1 and FTSZ2-2. Recruited ARC3 to the middle of the plastid where subsequent complex made of CDP1/PARC6, ARC3 and FtsZ proteins can form; this complex enhances the dynamics of Z rings during chloroplast division. Interacts (via C-terminus) with PDV1 (via C-terminus). Interacts with MIND1. Exclusively expressed in young green tissues such as young cotyledons, shoot apex, emerging leaves and budding inflorescence.

It localises to the plastid. Its subcellular location is the chloroplast inner membrane. Functionally, component of the plastid division machinery required for PDV1 localization to constriction sites. Involved in chloroplast division site placement. Required for the proper formation of FtsZ rings at the division site in nongreen plastids (e.g. etioplasts). Inhibits FtsZ assembly, functioning as an antagonistic regulator of FtsZ dynamics against ARC6, by recruiting ARC3 to the middle of the plastid to facilitate its interaction with FtsZ proteins. Required during stromule biogenesis in the leaf epidermis, especially in non-mesophyll cells plastids. The sequence is that of Plastid division protein CDP1, chloroplastic from Arabidopsis thaliana (Mouse-ear cress).